We begin with the raw amino-acid sequence, 388 residues long: Na(+)/H(+) antiporter NhaA (388 aa).

A run of 12 helical transmembrane segments spans residues Ala13–Pro33, Gly36–Ala56, Leu59–Val79, Val95–Phe115, Gly125–Gly145, Val154–Phe174, Val179–Trp199, Leu213–Ile233, Val259–Val279, Leu287–Phe307, Val328–Leu348, and Leu363–Ser383.

Belongs to the NhaA Na(+)/H(+) (TC 2.A.33) antiporter family.

The protein resides in the cell inner membrane. It catalyses the reaction Na(+)(in) + 2 H(+)(out) = Na(+)(out) + 2 H(+)(in). Na(+)/H(+) antiporter that extrudes sodium in exchange for external protons. The sequence is that of Na(+)/H(+) antiporter NhaA from Serratia proteamaculans (strain 568).